A 109-amino-acid polypeptide reads, in one-letter code: Nucleoid-associated protein HI_0442 (109 aa).

It belongs to the YbaB/EbfC family. Homodimer.

Its subcellular location is the cytoplasm. It localises to the nucleoid. Binds to DNA and alters its conformation. May be involved in regulation of gene expression, nucleoid organization and DNA protection. The protein is Nucleoid-associated protein HI_0442 of Haemophilus influenzae (strain ATCC 51907 / DSM 11121 / KW20 / Rd).